Reading from the N-terminus, the 361-residue chain is Phosphoribosylformylglycinamidine cyclo-ligase (361 aa).

The protein belongs to the AIR synthase family.

It is found in the cytoplasm. The enzyme catalyses 2-formamido-N(1)-(5-O-phospho-beta-D-ribosyl)acetamidine + ATP = 5-amino-1-(5-phospho-beta-D-ribosyl)imidazole + ADP + phosphate + H(+). Its pathway is purine metabolism; IMP biosynthesis via de novo pathway; 5-amino-1-(5-phospho-D-ribosyl)imidazole from N(2)-formyl-N(1)-(5-phospho-D-ribosyl)glycinamide: step 2/2. This chain is Phosphoribosylformylglycinamidine cyclo-ligase, found in Bartonella quintana (strain Toulouse) (Rochalimaea quintana).